The sequence spans 726 residues: Dipeptidyl-peptidase 5 (726 aa).

The N-terminal stretch at 1 to 19 (MAPAKWLIASLAFASTGLA) is a signal peptide. Asn-96 and Asn-252 each carry an N-linked (GlcNAc...) asparagine glycan. The interval 268–292 (VAEPINKRNGPRTPHGIEGASSSPV) is disordered. An N-linked (GlcNAc...) asparagine glycan is attached at Asn-485. Ser-558 serves as the catalytic Charge relay system. N-linked (GlcNAc...) asparagine glycosylation is present at Asn-605. Catalysis depends on charge relay system residues Asp-641 and His-673. Asn-699 is a glycosylation site (N-linked (GlcNAc...) asparagine).

Belongs to the peptidase S9C family.

It localises to the secreted. Extracellular dipeptidyl-peptidase which removes N-terminal dipeptides sequentially from polypeptides having unsubstituted N-termini. Contributes to pathogenicity. The protein is Dipeptidyl-peptidase 5 (DPP5) of Arthroderma otae (Microsporum canis).